A 623-amino-acid chain; its full sequence is E3 ubiquitin-protein ligase DTX1 (623 aa).

WWE domains are found at residues 13-93 (HNFG…PVRR) and 94-170 (NFFE…RLRR). The interval 224–319 (KVPSGPPPAL…RASIPPGVPA (96 aa)) is disordered. Over residues 227–242 (SGPPPALPPPPPPPIH) the composition is skewed to pro residues. The segment covering 292–311 (GQNNLNRPGEQRTSGSSSRA) has biased composition (polar residues). Residues 413-474 (CTICMERLVT…DGSLQCPTCK (62 aa)) form an RING-type zinc finger.

This sequence belongs to the Deltex family. May form a homo- or heterodimer with other members of the Deltex family. Probably interacts with Notch1. Specifically expressed in regions undergoing neuronal differentiation. Mainly colocalizes with Notch1.

The catalysed reaction is S-ubiquitinyl-[E2 ubiquitin-conjugating enzyme]-L-cysteine + [acceptor protein]-L-lysine = [E2 ubiquitin-conjugating enzyme]-L-cysteine + N(6)-ubiquitinyl-[acceptor protein]-L-lysine.. It participates in protein modification; protein ubiquitination. Its function is as follows. Regulator of Notch signaling, a signaling pathway involved in cell-cell communications that regulates a broad spectrum of cell-fate determinations. Probably acts both as a positive and negative regulator of Notch, depending on the developmental and cell context. Functions as a ubiquitin ligase protein in vivo, mediating ubiquitination and promoting degradation of MEKK1, suggesting that it may regulate the Notch pathway via some ubiquitin ligase activity. The chain is E3 ubiquitin-protein ligase DTX1 (dtx1) from Xenopus laevis (African clawed frog).